Here is a 437-residue protein sequence, read N- to C-terminus: MIKPVGSDELKPLFVYDPEEHHKLSHEAESLPSVVISSQGPRVSSMMGAGYFSPAGFMNVADAMGAAEKMTLSDGSSSCSVLCLLENTDAIGDAKRIALRDPNVEGNPVLAVMDIEAIEEVSDEQMAVMTDKVYRTTDMDHIGVKTFNSQGRVAVSGPIQVLNFSYFQADFPDTFRTAVEIRNEIKEHGWSKVVAFQTRNPMHRAHEELCRMPMESLDADGVVVHMLLGKLKKGDIPAPVRDAAIRTMAEVYFPPNTVMVTGYGFDMLYAGPREAVLHAYFRQNMGATHFIIGREPPAWVTTTVPSTPRPSSMTKCQRAPWRSRSSCRPHGLLQEAEQDCDDARRAGSHQGRLRTALRHQGREMLGQGIAPPPEFSRPEVAKILMDLLPVHQQLILIWFSGKTRPGVGRWRVFLCAAGALWPEAVAVANMEKRSSTG.

The segment covering 303-314 has biased composition (low complexity); sequence TVPSTPRPSSMT. The tract at residues 303-322 is disordered; that stretch reads TVPSTPRPSSMTKCQRAPWR.

The protein belongs to the sulfate adenylyltransferase family.

It catalyses the reaction sulfate + ATP + H(+) = adenosine 5'-phosphosulfate + diphosphate. It functions in the pathway sulfur metabolism; hydrogen sulfide biosynthesis; sulfite from sulfate: step 1/3. The chain is Sulfate adenylyltransferase (sat) from Riftia pachyptila sulfur-oxidizing endosymbiont.